We begin with the raw amino-acid sequence, 273 residues long: 3-methyl-2-oxobutanoate hydroxymethyltransferase (273 aa).

Mg(2+) contacts are provided by aspartate 53 and aspartate 92. 3-methyl-2-oxobutanoate contacts are provided by residues aspartate 53–serine 54, aspartate 92, and lysine 120. Glutamate 122 provides a ligand contact to Mg(2+). Glutamate 189 acts as the Proton acceptor in catalysis.

Belongs to the PanB family. Homodecamer; pentamer of dimers. Requires Mg(2+) as cofactor.

Its subcellular location is the cytoplasm. It catalyses the reaction 3-methyl-2-oxobutanoate + (6R)-5,10-methylene-5,6,7,8-tetrahydrofolate + H2O = 2-dehydropantoate + (6S)-5,6,7,8-tetrahydrofolate. It functions in the pathway cofactor biosynthesis; (R)-pantothenate biosynthesis; (R)-pantoate from 3-methyl-2-oxobutanoate: step 1/2. In terms of biological role, catalyzes the reversible reaction in which hydroxymethyl group from 5,10-methylenetetrahydrofolate is transferred onto alpha-ketoisovalerate to form ketopantoate. The polypeptide is 3-methyl-2-oxobutanoate hydroxymethyltransferase (Cupriavidus necator (strain ATCC 17699 / DSM 428 / KCTC 22496 / NCIMB 10442 / H16 / Stanier 337) (Ralstonia eutropha)).